A 108-amino-acid chain; its full sequence is uncharacterized protein (108 aa).

2 consecutive transmembrane segments (helical) span residues 51–71 (VFAA…FCFL) and 86–106 (PLST…KSLL).

It localises to the membrane. This is an uncharacterized protein from Saccharomyces cerevisiae (strain ATCC 204508 / S288c) (Baker's yeast).